Reading from the N-terminus, the 297-residue chain is MSWIIFYTIIAALLILDLGIIHKKNKVISFKGSILLSLFYFIISCLFGIYVYHNMGLDHAREYYTCFLIEKAMALDNIFIISIIFQFFNIPSTYQHRVLFFGIIGVIIFKAIIIYGGIMLIHKFSWLLYILAVILIATGIKTFNVSHKTYDIQNSYIYKSIIKNLNITHDLEGQKFVIKRNNKLYFSTLFVSLILIETIDLVFAIDSIAAIFAITNDVYIIYTSNIFAILGLRSLFFCLSEIVERFSYIKYSLALILIFIGFKIFIHHYIEIPAYISLTVTISSLLFGIIASILEKI.

A run of 9 helical transmembrane segments spans residues 1 to 21, 32 to 52, 72 to 92, 98 to 118, 120 to 140, 194 to 214, 218 to 238, 253 to 273, and 274 to 294; these read MSWIIFYTIIAALLILDLGII, GSILLSLFYFIISCLFGIYVY, AMALDNIFIISIIFQFFNIPS, VLFFGIIGVIIFKAIIIYGGI, LIHKFSWLLYILAVILIATGI, ILIETIDLVFAIDSIAAIFAI, VYIIYTSNIFAILGLRSLFFC, LALILIFIGFKIFIHHYIEIP, and AYISLTVTISSLLFGIIASIL.

It belongs to the TerC family.

The protein resides in the cell membrane. This is an uncharacterized protein from Rickettsia prowazekii (strain Madrid E).